A 46-amino-acid polypeptide reads, in one-letter code: Viscotoxin-C1 (46 aa).

3 cysteine pairs are disulfide-bonded: C3/C40, C4/C32, and C16/C26.

Monomer.

The protein localises to the secreted. Its function is as follows. Thionins are small plant proteins which are toxic to animal cells. They seem to exert their toxic effect at the level of the cell membrane. Their precise function is not known. This Viscum album (European mistletoe) protein is Viscotoxin-C1.